Here is a 75-residue protein sequence, read N- to C-terminus: Small ribosomal subunit protein bS16c (75 aa).

The protein belongs to the bacterial ribosomal protein bS16 family.

It is found in the plastid. It localises to the chloroplast. This is Small ribosomal subunit protein bS16c from Cyanidium caldarium (Red alga).